Reading from the N-terminus, the 451-residue chain is Tubulin gamma-2 chain (451 aa).

The residue at position 131 (Ser-131) is a Phosphoserine; by BRSK1. Position 142 to 148 (142 to 148 (AGGTGSG)) interacts with GTP.

It belongs to the tubulin family. In terms of assembly, component of the gamma-tubulin ring complex (gTuRC) consisting of TUBGCP2, TUBGCP3, TUBGCP4, TUBGCP5 and TUBGCP6 and gamma-tubulin TUBG1 or TUBG2. TUBGCP2, TUBGCP3, TUBGCP4, TUBGCP5 and TUBGCP6 assemble in a 5:5:2:1:1 stoichiometry; each is associated with a gamma-tubulin, thereby arranging 14 gamma-tubulins in a helical manner. Gamma-tubulin at the first position is blocked by TUBGCP3 at the last position, allowing 13 protafilaments to grow into a microtubule. Interacts with alpha-beta tubulin heterodimers; the interaction allows microtubules to nucleate from the gTuRC. Post-translationally, phosphorylation at Ser-131 by BRSK1 regulates centrosome duplication, possibly by mediating relocation of gamma-tubulin and its associated proteins from the cytoplasm to the centrosome.

It localises to the cytoplasm. The protein localises to the cytoskeleton. Its subcellular location is the microtubule organizing center. It is found in the centrosome. In terms of biological role, tubulin is the major constituent of microtubules, protein filaments consisting of alpha- and beta-tubulin heterodimers. Gamma-tubulin is a key component of the gamma-tubulin ring complex (gTuRC) which mediates microtubule nucleation. The gTuRC regulates the minus-end nucleation of alpha-beta tubulin heterodimers that grow into microtubule protafilaments, a critical step in centrosome duplication and spindle formation. The protein is Tubulin gamma-2 chain (TUBG2) of Homo sapiens (Human).